The following is a 220-amino-acid chain: Translation initiation factor 6 (220 aa).

Belongs to the eIF-6 family.

Binds to the 50S ribosomal subunit and prevents its association with the 30S ribosomal subunit to form the 70S initiation complex. The protein is Translation initiation factor 6 of Methanoculleus marisnigri (strain ATCC 35101 / DSM 1498 / JR1).